The sequence spans 204 residues: Transmembrane protein 253 (204 aa).

4 helical membrane-spanning segments follow: residues 33-53, 62-82, 96-116, and 138-158; these read LVLA…TISV, LVTA…IITL, MMIS…IEVM, and LSAE…LFLL. Residues 184–204 are disordered; it reads EEVSGLENGPVVASTGNRTDE.

It localises to the membrane. In Mus musculus (Mouse), this protein is Transmembrane protein 253 (Tmem253).